A 1774-amino-acid polypeptide reads, in one-letter code: U3 small nucleolar RNA-associated protein 10 (1774 aa).

A disordered region spans residues T1209–P1228. The HEAT repeat unit spans residues L1734 to Y1772.

It belongs to the HEATR1/UTP10 family. Component of the ribosomal small subunit (SSU) processome.

Its subcellular location is the nucleus. The protein resides in the nucleolus. Functionally, involved in nucleolar processing of pre-18S ribosomal RNA. Involved in ribosome biosynthesis. The protein is U3 small nucleolar RNA-associated protein 10 of Eremothecium gossypii (strain ATCC 10895 / CBS 109.51 / FGSC 9923 / NRRL Y-1056) (Yeast).